We begin with the raw amino-acid sequence, 644 residues long: Protein cueball (644 aa).

The signal sequence occupies residues 1–26 (MIRIRFGMDVLLVLLLATCLLSPTHG). Topologically, residues 27–531 (TPLEWDFAVT…VCLTPTVWTS (505 aa)) are extracellular. Residues Asn82 and Asn108 are each glycosylated (N-linked (GlcNAc...) asparagine). LDL-receptor class B repeat units lie at residues 121–166 (TNLF…DVCR), 167–211 (RKLY…DQLS), and 212–257 (DRLF…TNDA). N-linked (GlcNAc...) asparagine glycosylation is found at Asn175 and Asn190. Asn313 carries N-linked (GlcNAc...) asparagine glycosylation. EGF-like domains are found at residues 398–430 (EIRE…FTGE) and 433–471 (EVSV…ARCE). 5 disulfides stabilise this stretch: Cys402–Cys411, Cys406–Cys421, Cys437–Cys447, Cys441–Cys459, and Cys461–Cys470. N-linked (GlcNAc...) asparagine glycans are attached at residues Asn473 and Asn508. Residues 532-552 (SVIIILVVGIVSSLLLVAVIV) form a helical membrane-spanning segment. Residues 553–644 (HGIRRLYKPK…LIHNMEDDLY (92 aa)) are Cytoplasmic-facing.

This sequence belongs to the cueball family.

It localises to the cell membrane. Functionally, has a role in spermatogenesis and oogenesis. The polypeptide is Protein cueball (Drosophila yakuba (Fruit fly)).